The chain runs to 84 residues: RNA-binding protein SAHV_0542 (84 aa).

It belongs to the eukaryotic ribosomal protein eL8 family.

This is RNA-binding protein SAHV_0542 from Staphylococcus aureus (strain Mu3 / ATCC 700698).